The primary structure comprises 382 residues: D-alanine--D-alanine ligase (382 aa).

One can recognise an ATP-grasp domain in the interval 161–372; that stretch reads KVVFEAAGLQ…YAELIDELIY (212 aa). 193–248 lines the ATP pocket; sequence VDRLGYPVFVKPARAGSSMGISKVDSLEGLDAAIAAAREHDLKLVIEAGIVGREIE. Mg(2+) is bound by residues aspartate 326, glutamate 339, and asparagine 341.

Belongs to the D-alanine--D-alanine ligase family. It depends on Mg(2+) as a cofactor. Requires Mn(2+) as cofactor.

Its subcellular location is the cytoplasm. It carries out the reaction 2 D-alanine + ATP = D-alanyl-D-alanine + ADP + phosphate + H(+). Its pathway is cell wall biogenesis; peptidoglycan biosynthesis. Functionally, cell wall formation. This Arthrobacter sp. (strain FB24) protein is D-alanine--D-alanine ligase.